The following is a 417-amino-acid chain: D-galactonate dehydratase family member RspA (417 aa).

Substrate contacts are provided by glutamine 43 and histidine 127. The active-site Proton donor/acceptor is tyrosine 158. Aspartate 223 contributes to the Mg(2+) binding site. Histidine 225 functions as the Proton donor/acceptor in the catalytic mechanism. The Mg(2+) site is built by glutamate 249 and glutamate 275. Residues glutamate 275, arginine 296, histidine 325, aspartate 329, and glutamate 352 each contribute to the substrate site.

This sequence belongs to the mandelate racemase/muconate lactonizing enzyme family. GalD subfamily. Mg(2+) is required as a cofactor.

It catalyses the reaction D-gluconate = 2-dehydro-3-deoxy-D-gluconate + H2O. In terms of biological role, has low D-gluconate dehydratase activity (in vitro), suggesting that it has no significant role in D-gluconate degradation in vivo. Has no detectable activity with a panel of 70 other acid sugars (in vitro). The sequence is that of D-galactonate dehydratase family member RspA (rspA) from Pantoea ananatis (strain LMG 20103).